We begin with the raw amino-acid sequence, 337 residues long: Protein FAM76B (337 aa).

A disordered region spans residues 143–241 (EQRKSLGSTH…INQSTDSGGT (99 aa)). Low complexity predominate over residues 147–159 (SLGSTHSNSSSSS). Basic residues predominate over residues 166 to 187 (HHSKHHHHHHHHHRHSSSHHKI). Positions 213–222 (TPKKKPKLEF) are enriched in basic and acidic residues. Positions 226–241 (NGDSSSINQSTDSGGT) are enriched in polar residues. Positions 301–326 (KDFVEQLQGKNRELLKQVAALSKGKK) form a coiled coil.

This sequence belongs to the FAM76 family.

Plays a role in hematopoiesis and immune system development, and participates in the inflammatory response. The chain is Protein FAM76B (fam76b) from Xenopus laevis (African clawed frog).